Consider the following 349-residue polypeptide: Peroxidase C3 (349 aa).

A signal peptide spans 1-29 (MGFSPLISCSAMGALILSCLLLQASNSNA). 4 disulfides stabilise this stretch: cysteine 40–cysteine 120, cysteine 73–cysteine 78, cysteine 126–cysteine 329, and cysteine 206–cysteine 238. The active-site Proton acceptor is the histidine 71. Residues aspartate 72, valine 75, glycine 77, aspartate 79, and serine 81 each contribute to the Ca(2+) site. An N-linked (GlcNAc...) asparagine glycan is attached at asparagine 86. Residue proline 168 coordinates substrate. A heme b-binding site is contributed by histidine 199. Ca(2+) is bound at residue threonine 200. N-linked (GlcNAc...) asparagine glycans are attached at residues asparagine 217 and asparagine 243. Positions 251, 254, and 259 each coordinate Ca(2+).

This sequence belongs to the peroxidase family. Classical plant (class III) peroxidase subfamily. Ca(2+) is required as a cofactor. The cofactor is heme b.

Its subcellular location is the secreted. It is found in the vacuole. The enzyme catalyses 2 a phenolic donor + H2O2 = 2 a phenolic radical donor + 2 H2O. Its function is as follows. Removal of H(2)O(2), oxidation of toxic reductants, biosynthesis and degradation of lignin, suberization, auxin catabolism, response to environmental stresses such as wounding, pathogen attack and oxidative stress. These functions might be dependent on each isozyme/isoform in each plant tissue. The polypeptide is Peroxidase C3 (PRXC3) (Armoracia rusticana (Horseradish)).